The chain runs to 320 residues: Small ribosomal subunit protein mS35 (320 aa).

The segment at 24-63 (SVASPAAPRAGPRTASRSERPMRRKALPPRTEKMDTDQDW) is disordered.

The protein belongs to the mitochondrion-specific ribosomal protein mS35 family. As to quaternary structure, component of the mitochondrial ribosome small subunit (28S) which comprises a 12S rRNA and about 30 distinct proteins.

Its subcellular location is the mitochondrion. This is Small ribosomal subunit protein mS35 from Mus musculus (Mouse).